Reading from the N-terminus, the 519-residue chain is uncharacterized protein (519 aa).

The next 11 membrane-spanning stretches (helical) occupy residues 52 to 72 (IYFL…VRGS), 86 to 106 (LATY…SPIV), 119 to 139 (TWVV…SYNV), 156 to 176 (WSFL…GWSL), 199 to 219 (FFLS…NTFI), 231 to 251 (LSGY…LVCF), 313 to 333 (MLSL…VYTG), 343 to 363 (IWLK…ILVY), 374 to 394 (VFFP…IQFV), 408 to 430 (IGGT…PQYV), and 477 to 497 (TSIV…TPVV).

The protein resides in the membrane. This is an uncharacterized protein from Schizosaccharomyces pombe (strain 972 / ATCC 24843) (Fission yeast).